A 500-amino-acid polypeptide reads, in one-letter code: NAD(P)H-quinone oxidoreductase chain 4, chloroplastic (500 aa).

The next 13 membrane-spanning stretches (helical) occupy residues 4–24 (FPWL…MLFL), 35–55 (YTIS…CYNF), 87–107 (IGTI…AFPV), 134–154 (LLLF…LLSM), 167–187 (FILY…GISL), 211–231 (ILFY…IPLH), 242–262 (HYST…YGLV), 272–292 (AHSM…IYAA), 305–325 (IAYS…SITD), 330–350 (GAIL…FLAG), 386–406 (LALP…GIIT), 416–436 (IFII…LLSM), and 462–482 (LFLS…PDFV).

The protein belongs to the complex I subunit 4 family.

The protein resides in the plastid. The protein localises to the chloroplast thylakoid membrane. The enzyme catalyses a plastoquinone + NADH + (n+1) H(+)(in) = a plastoquinol + NAD(+) + n H(+)(out). It carries out the reaction a plastoquinone + NADPH + (n+1) H(+)(in) = a plastoquinol + NADP(+) + n H(+)(out). The protein is NAD(P)H-quinone oxidoreductase chain 4, chloroplastic of Crucihimalaya wallichii (Rock-cress).